An 809-amino-acid polypeptide reads, in one-letter code: Lon protease (809 aa).

The Lon N-terminal domain maps to 20 to 216; it reads LPLLALRDVV…ELMNYLMNQS (197 aa). 369 to 376 serves as a coordination point for ATP; the sequence is GPPGVGKT. The 182-residue stretch at 606-787 folds into the Lon proteolytic domain; the sequence is EAQVGRVNGL…DEILPLALTS (182 aa). Catalysis depends on residues Ser-693 and Lys-736.

Belongs to the peptidase S16 family. In terms of assembly, homohexamer. Organized in a ring with a central cavity.

Its subcellular location is the cytoplasm. It catalyses the reaction Hydrolysis of proteins in presence of ATP.. ATP-dependent serine protease that mediates the selective degradation of mutant and abnormal proteins as well as certain short-lived regulatory proteins. Required for cellular homeostasis and for survival from DNA damage and developmental changes induced by stress. Degrades polypeptides processively to yield small peptide fragments that are 5 to 10 amino acids long. Binds to DNA in a double-stranded, site-specific manner. The protein is Lon protease of Acinetobacter baumannii (strain AB307-0294).